A 333-amino-acid polypeptide reads, in one-letter code: L-lactate dehydrogenase B chain (333 aa).

Residues Gly-29 to Lys-57 and Arg-99 contribute to the NAD(+) site. Substrate-binding residues include Arg-106, Asn-138, and Arg-169. Asn-138 lines the NAD(+) pocket. His-193 acts as the Proton acceptor in catalysis. Thr-248 is a binding site for substrate.

It belongs to the LDH/MDH superfamily. LDH family. As to quaternary structure, homotetramer.

Its subcellular location is the cytoplasm. The catalysed reaction is (S)-lactate + NAD(+) = pyruvate + NADH + H(+). Its pathway is fermentation; pyruvate fermentation to lactate; (S)-lactate from pyruvate: step 1/1. In terms of biological role, interconverts simultaneously and stereospecifically pyruvate and lactate with concomitant interconversion of NADH and NAD(+). The protein is L-lactate dehydrogenase B chain (LDHB) of Alligator mississippiensis (American alligator).